A 234-amino-acid chain; its full sequence is Coiled-coil domain-containing protein 194 (234 aa).

The signal sequence occupies residues 1-42 (MAEPGPEPGRAWRVLALCGVAVFLAAAAAGGALVAWNLAASA). Disordered regions lie at residues 44–67 (RGPRCPEPGANATAPPGDPPPGVD) and 187–234 (VLEA…RARG). The stretch at 66–163 (VDDLRRRLAE…TRRLDEALRR (98 aa)) forms a coiled coil. Residues 187-196 (VLEAEMSPQR) are compositionally biased toward low complexity. A compositionally biased stretch (basic residues) spans 197–217 (RVPRPRPRSGSRPRPSPRSRS).

The sequence is that of Coiled-coil domain-containing protein 194 from Homo sapiens (Human).